Here is a 382-residue protein sequence, read N- to C-terminus: Acetylserotonin O-methyltransferase (382 aa).

S-adenosyl-L-homocysteine-binding residues include Gly-218, Asp-241, Asp-261, Met-262, and Lys-275. His-279 serves as the catalytic Proton acceptor. Residues Glu-308 and Glu-347 contribute to the active site.

Belongs to the class I-like SAM-binding methyltransferase superfamily. Cation-independent O-methyltransferase family.

Its subcellular location is the cytoplasm. The enzyme catalyses N-acetylserotonin + S-adenosyl-L-methionine = melatonin + S-adenosyl-L-homocysteine + H(+). It participates in aromatic compound metabolism; melatonin biosynthesis; melatonin from serotonin: step 1/2. In terms of biological role, methyltransferase which catalyzes the transfer of a methyl group onto N-acetylserotonin, producing melatonin (N-acetyl-5-methoxytryptamine). Does not seem to possess caffeate O-methyltransferase activity. Implicated in melatonin-dependent circadian dynamics of stomatal aperture to minimize night water loss and promote drought tolerance. Prevents seed germination by promoting melatonin biosynthesis. Promotes melatonin-triggered defense responses to the necrotrophic fungus Botrytis cinerea. Its function is as follows. (Microbial infection) Promotes melatonin-triggered defense responses to the necrotrophic fungus Botrytis cinerea. In Arabidopsis thaliana (Mouse-ear cress), this protein is Acetylserotonin O-methyltransferase.